A 54-amino-acid chain; its full sequence is MGKYKPPAERKYGRGVQVCRRCGSRDSVIQKYGLYLCRQCFREVAYEMGFKKTR.

Positions 19, 22, 37, and 40 each coordinate Zn(2+).

This sequence belongs to the universal ribosomal protein uS14 family. Zinc-binding uS14 subfamily. As to quaternary structure, part of the 30S ribosomal subunit. The cofactor is Zn(2+).

Binds 16S rRNA, required for the assembly of 30S particles. The sequence is that of Small ribosomal subunit protein uS14 from Sulfurisphaera tokodaii (strain DSM 16993 / JCM 10545 / NBRC 100140 / 7) (Sulfolobus tokodaii).